The sequence spans 195 residues: Putative NADH dehydrogenase/NAD(P)H nitroreductase RSc1004 (195 aa).

Belongs to the nitroreductase family. HadB/RutE subfamily. Requires FMN as cofactor.

The sequence is that of Putative NADH dehydrogenase/NAD(P)H nitroreductase RSc1004 from Ralstonia nicotianae (strain ATCC BAA-1114 / GMI1000) (Ralstonia solanacearum).